Consider the following 764-residue polypeptide: 5-methyltetrahydropteroyltriglutamate--homocysteine methyltransferase (764 aa).

5-methyltetrahydropteroyltri-L-glutamate-binding positions include 16–19 and Lys121; that span reads RELK. L-homocysteine-binding positions include 440 to 442 and Glu493; that span reads IGS. L-methionine-binding positions include 440–442 and Glu493; that span reads IGS. 5-methyltetrahydropteroyltri-L-glutamate is bound by residues 524–525 and Trp570; that span reads RC. Asp608 contributes to the L-homocysteine binding site. Asp608 is a binding site for L-methionine. Glu614 contacts 5-methyltetrahydropteroyltri-L-glutamate. His650, Cys652, and Glu674 together coordinate Zn(2+). Residue His703 is the Proton donor of the active site. Cys735 is a binding site for Zn(2+).

The protein belongs to the vitamin-B12 independent methionine synthase family. It depends on Zn(2+) as a cofactor.

It catalyses the reaction 5-methyltetrahydropteroyltri-L-glutamate + L-homocysteine = tetrahydropteroyltri-L-glutamate + L-methionine. It participates in amino-acid biosynthesis; L-methionine biosynthesis via de novo pathway; L-methionine from L-homocysteine (MetE route): step 1/1. Functionally, catalyzes the transfer of a methyl group from 5-methyltetrahydrofolate to homocysteine resulting in methionine formation. This Burkholderia cenocepacia (strain HI2424) protein is 5-methyltetrahydropteroyltriglutamate--homocysteine methyltransferase.